Here is a 567-residue protein sequence, read N- to C-terminus: TPR repeat-containing protein MJ1428 (567 aa).

TPR repeat units follow at residues 14-47, 48-81, 83-115, 116-148, 150-183, 199-234, 236-268, 269-301, 303-335, 344-379, 380-412, 414-446, and 505-538; these read YEDW…KNTN, PIDW…SPSN, YFAY…IKNE, ELFE…ANSK, LNAL…NPSH, INSY…DENS, ISYY…FNRS, LYYA…NSQN, YAYF…YLEE, LNLY…ENSS, RWWY…NPKD, STLK…VNSL, and AYIY…EMYR.

This is TPR repeat-containing protein MJ1428 from Methanocaldococcus jannaschii (strain ATCC 43067 / DSM 2661 / JAL-1 / JCM 10045 / NBRC 100440) (Methanococcus jannaschii).